A 308-amino-acid chain; its full sequence is tRNA uridine(34) hydroxylase (308 aa).

One can recognise a Rhodanese domain in the interval 129 to 223; sequence QEKDVLILDA…YGKHPETQGV (95 aa). Cysteine 183 serves as the catalytic Cysteine persulfide intermediate.

This sequence belongs to the TrhO family.

It carries out the reaction uridine(34) in tRNA + AH2 + O2 = 5-hydroxyuridine(34) in tRNA + A + H2O. Catalyzes oxygen-dependent 5-hydroxyuridine (ho5U) modification at position 34 in tRNAs. In Aster yellows witches'-broom phytoplasma (strain AYWB), this protein is tRNA uridine(34) hydroxylase.